The chain runs to 772 residues: Transcription factor sdnS (772 aa).

The segment at residues 23-53 is a DNA-binding region (zn(2)-C6 fungal-type); sequence CWECRRRKIRCQFGAGNDTVCLPCQARGSTC. 2 disordered regions span residues 94–121 and 156–180; these read EAGG…SAQN and ASML…NSKT. Residues 100 to 121 are compositionally biased toward polar residues; the sequence is ANRSTTQSNRGSRSPSPDSAQN.

It localises to the nucleus. It participates in antibiotic biosynthesis. Transcription factor; part of the gene cluster that mediates the biosynthesis of sordarin and hypoxysordarin, glycoside antibiotics with a unique tetracyclic diterpene aglycone structure. First, the geranylgeranyl diphosphate synthase sdnC constructs GGDP from farnesyl diphosphate and isopentenyl diphosphate. The diterpene cyclase sdnA then catalyzes the cyclization of GGDP to afford cycloaraneosene. Cycloaraneosene is then hydroxylated four times by the putative cytochrome P450 monooxygenases sdnB, sdnE, sdnF and sdnH to give a hydroxylated cycloaraneosene derivative such as cycloaraneosene-8,9,13,19-tetraol. Although the order of the hydroxylations is unclear, at least C8, C9 and C13 of the cycloaraneosene skeleton are hydroxylated before the sordaricin formation. Dehydration of the 13-hydroxy group of the hydroxylated cycloaraneosene derivative might be catalyzed by an unassigned hypothetical protein such as sdnG and sdnP to construct the cyclopentadiene moiety. The FAD-dependent oxidoreductase sdnN is proposed to catalyze the oxidation at C9 of the hydroxylated cycloaraneosene derivative and also catalyze the Baeyer-Villiger oxidation to give the lactone intermediate. The presumed lactone intermediate would be hydrolyzed to give an acrolein moiety and a carboxylate moiety. Then, [4+2]cycloaddition would occur between the acrolein moiety and the cyclopentadiene moiety to give sordaricin. SdnN might also be involved in the [4+2]cycloaddition after the hypothesized oxidation to accommodate the oxidized product and prompt the [4+2]cycloaddition. GDP-6-deoxy-D-altrose may be biosynthesized from GDP-D-mannose by the putative GDP-mannose-4,6-dehydratase sdnI and the short-chain dehydrogenase sdnK. The glycosyltransferase sdnJ catalyzes the attachment of 6-deoxy-D-altrose onto the 19-hydroxy group of sordaricin to give 4'-O-demethylsordarin. The methyltransferase sdnD would complete the biosynthesis of sordarin. Sordarin can be further modified into hypoxysordarin. The unique acyl chain at the 3'-hydroxy group of hypoxysordarin would be constructed by an iterative type I PKS sdnO and the trans-acting polyketide methyltransferase sdnL. SdnL would be responsible for the introduction of an alpha-methyl group of the polyketide chain. Alternatively, the beta-lactamase-like protein sdnR might be responsible for the cleavage and transfer of the polyketide chain from the PKS sdnO to sordarin. Two putative cytochrome P450 monooxygenases, sdnQ and sdnT, might catalyze the epoxidations of the polyketide chain to complete the biosynthesis of hypoxysordarin. Transcriptional regulators sdnM and sdnS are presumably encoded for the transcriptional regulation of the expression of the sdn gene cluster. This Sordaria araneosa (Pleurage araneosa) protein is Transcription factor sdnS.